A 1156-amino-acid polypeptide reads, in one-letter code: ATP-dependent RNA helicase glh-4 (1156 aa).

Disordered regions lie at residues 1–81, 194–213, 231–423, and 436–522; these read MSFS…GAPS, TGVG…GQQP, SSSG…DSST, and HRAS…SGLG. Positions 12-22 are enriched in basic and acidic residues; the sequence is AEVKVAEDVPE. The segment covering 24-34 has biased composition (pro residues); sequence NVPPPVEPPRA. Polar residues-rich tracts occupy residues 60 to 73, 194 to 211, and 243 to 258; these read ITTS…TTPK, TGVG…SFGQ, and TESS…TSQP. Positions 259–281 are enriched in gly residues; the sequence is GFGGDSSTGFGSGLKAGFGGHGA. Residues 307 to 319 are compositionally biased toward polar residues; it reads ASSSNESAFGQQS. Composition is skewed to gly residues over residues 321-332 and 342-358; these read GFGGATKNGFGG and SKAG…GGQK. Polar residues-rich tracts occupy residues 362–371 and 395–406; these read TESSGFPTKE and PSTTDSSSGQQT. Residues 408–423 are compositionally biased toward gly residues; the sequence is GFGGASKPGFGGDSST. 2 stretches are compositionally biased toward polar residues: residues 440-451 and 464-476; these read TAENSGLPTETT and ASSS…GQQS. The segment covering 478 to 489 has biased composition (gly residues); it reads GFGGATKNGFGG. CCHC-type zinc fingers lie at residues 570–587, 593–610, 616–633, 639–656, and 665–682; these read RGCH…ECDK, FPCR…DCDQ, GPCR…DCDQ, GPCR…DCQN, and EPCR…ECPT. The Q motif signature appears at 736 to 764; the sequence is SFDGFKILPQDLHDNLKRMKMNRPTPIQR. The 185-residue stretch at 767–951 folds into the Helicase ATP-binding domain; that stretch reads FFPIMHGNDV…LPKFVKEGYT (185 aa). 780 to 787 contributes to the ATP binding site; sequence AHTGSGKT. A DEAD box motif is present at residues 897–900; it reads DEAD. The Helicase C-terminal domain maps to 986-1139; the sequence is GIDENTVTLL…EVPEWLTEGA (154 aa). The interval 1135-1156 is disordered; sequence LTEGAGHQEEGGDDWNEQEQEW. Acidic residues predominate over residues 1145 to 1156; the sequence is GGDDWNEQEQEW.

The protein belongs to the DEAD box helicase family. DDX4/VASA subfamily. In terms of assembly, interacts (via C-terminus) with kgb-1.

The catalysed reaction is ATP + H2O = ADP + phosphate + H(+). Functionally, probable ATP-binding RNA helicase. May act redundantly with the P-granule component glh-1 to regulate the formation of the granular structure of P-granules in embryos. May protect somatic cells from excessive apoptosis during normal development. The polypeptide is ATP-dependent RNA helicase glh-4 (Caenorhabditis elegans).